The chain runs to 544 residues: Membrane protein insertase YidC (544 aa).

Helical transmembrane passes span 15 to 35 (LFLI…MLSF), 321 to 341 (LWYL…DVIP), 343 to 363 (WGLS…PLTF), 409 to 429 (LGGC…YSLV), and 506 to 526 (MPIM…IYWI).

It belongs to the OXA1/ALB3/YidC family. Type 1 subfamily. As to quaternary structure, interacts with the Sec translocase complex via SecD. Specifically interacts with transmembrane segments of nascent integral membrane proteins during membrane integration.

Its subcellular location is the cell inner membrane. Required for the insertion and/or proper folding and/or complex formation of integral membrane proteins into the membrane. Involved in integration of membrane proteins that insert both dependently and independently of the Sec translocase complex, as well as at least some lipoproteins. Aids folding of multispanning membrane proteins. The polypeptide is Membrane protein insertase YidC (Borrelia garinii subsp. bavariensis (strain ATCC BAA-2496 / DSM 23469 / PBi) (Borreliella bavariensis)).